A 288-amino-acid polypeptide reads, in one-letter code: Bifunctional protein FolD (288 aa).

Residues 166–168 (GRS), Ser191, and Ile232 each bind NADP(+).

The protein belongs to the tetrahydrofolate dehydrogenase/cyclohydrolase family. As to quaternary structure, homodimer.

The enzyme catalyses (6R)-5,10-methylene-5,6,7,8-tetrahydrofolate + NADP(+) = (6R)-5,10-methenyltetrahydrofolate + NADPH. It carries out the reaction (6R)-5,10-methenyltetrahydrofolate + H2O = (6R)-10-formyltetrahydrofolate + H(+). It functions in the pathway one-carbon metabolism; tetrahydrofolate interconversion. Catalyzes the oxidation of 5,10-methylenetetrahydrofolate to 5,10-methenyltetrahydrofolate and then the hydrolysis of 5,10-methenyltetrahydrofolate to 10-formyltetrahydrofolate. This Rickettsia massiliae (strain Mtu5) protein is Bifunctional protein FolD.